A 506-amino-acid chain; its full sequence is ATP synthase subunit alpha, chloroplastic (506 aa).

Gly172–Thr179 is a binding site for ATP.

This sequence belongs to the ATPase alpha/beta chains family. In terms of assembly, F-type ATPases have 2 components, CF(1) - the catalytic core - and CF(0) - the membrane proton channel. CF(1) has five subunits: alpha(3), beta(3), gamma(1), delta(1), epsilon(1). CF(0) has four main subunits: a, b, b' and c.

The protein localises to the plastid. The protein resides in the chloroplast thylakoid membrane. The enzyme catalyses ATP + H2O + 4 H(+)(in) = ADP + phosphate + 5 H(+)(out). In terms of biological role, produces ATP from ADP in the presence of a proton gradient across the membrane. The alpha chain is a regulatory subunit. The chain is ATP synthase subunit alpha, chloroplastic from Pleurastrum terricola (Filamentous green alga).